Consider the following 171-residue polypeptide: Endoribonuclease YbeY (171 aa).

Zn(2+)-binding residues include His115, His119, and His125.

This sequence belongs to the endoribonuclease YbeY family. The cofactor is Zn(2+).

It localises to the cytoplasm. Single strand-specific metallo-endoribonuclease involved in late-stage 70S ribosome quality control and in maturation of the 3' terminus of the 16S rRNA. This is Endoribonuclease YbeY from Tropheryma whipplei (strain TW08/27) (Whipple's bacillus).